Here is a 183-residue protein sequence, read N- to C-terminus: SsrA-binding protein (183 aa).

Positions methionine 1–asparagine 27 are disordered. Residues alanine 13–asparagine 27 are compositionally biased toward basic residues.

The protein belongs to the SmpB family.

The protein localises to the cytoplasm. Functionally, required for rescue of stalled ribosomes mediated by trans-translation. Binds to transfer-messenger RNA (tmRNA), required for stable association of tmRNA with ribosomes. tmRNA and SmpB together mimic tRNA shape, replacing the anticodon stem-loop with SmpB. tmRNA is encoded by the ssrA gene; the 2 termini fold to resemble tRNA(Ala) and it encodes a 'tag peptide', a short internal open reading frame. During trans-translation Ala-aminoacylated tmRNA acts like a tRNA, entering the A-site of stalled ribosomes, displacing the stalled mRNA. The ribosome then switches to translate the ORF on the tmRNA; the nascent peptide is terminated with the 'tag peptide' encoded by the tmRNA and targeted for degradation. The ribosome is freed to recommence translation, which seems to be the essential function of trans-translation. In Corynebacterium kroppenstedtii (strain DSM 44385 / JCM 11950 / CIP 105744 / CCUG 35717), this protein is SsrA-binding protein.